The sequence spans 575 residues: uncharacterized protein (575 aa).

The tract at residues 507-536 (AHRKVGELNNKKPMTGEKPPPKNKKSPKYK) is disordered.

This is an uncharacterized protein from Ostreid herpesvirus 1 (isolate France) (OsHV-1).